A 332-amino-acid polypeptide reads, in one-letter code: Ferredoxin--NADP reductase 2 (332 aa).

Asp-33, Gln-41, Tyr-46, Val-86, Ile-121, Asp-282, and Ser-325 together coordinate FAD.

This sequence belongs to the ferredoxin--NADP reductase type 2 family. Homodimer. FAD is required as a cofactor.

The catalysed reaction is 2 reduced [2Fe-2S]-[ferredoxin] + NADP(+) + H(+) = 2 oxidized [2Fe-2S]-[ferredoxin] + NADPH. The protein is Ferredoxin--NADP reductase 2 of Sulfolobus acidocaldarius (strain ATCC 33909 / DSM 639 / JCM 8929 / NBRC 15157 / NCIMB 11770).